The sequence spans 86 residues: Myosuppressin (86 aa).

The first 18 residues, 1–18 (MAIFCNNVLAALPTQCNP), serve as a signal peptide directing secretion. Positions 19 to 70 (GFLDDLPPRIRKVCVALSRIYELGSEMESYIGDKENHITGFHESIPLLDSGV) are excised as a propeptide. Q73 is subject to Pyrrolidone carboxylic acid. F82 carries the phenylalanine amide modification.

Its subcellular location is the secreted. Its function is as follows. Myoinhibiting neuropeptide. The protein is Myosuppressin of Apis mellifera (Honeybee).